The sequence spans 150 residues: Cytochrome c oxidase subunit 5A, mitochondrial (150 aa).

The N-terminal 41 residues, 1 to 41 (MLGTALRRCAVAAASRAGSRGLLHPTPVPGPTAAIQSIRCY), are a transit peptide targeting the mitochondrion. The short motif at 2–17 (LGTALRRCAVAAASRA) is the SIFI-degron element. An N6-acetyllysine mark is found at lysine 87 and lysine 113. Threonine 141 is subject to Phosphothreonine.

This sequence belongs to the cytochrome c oxidase subunit 5A family. Component of the cytochrome c oxidase (complex IV, CIV), a multisubunit enzyme composed of 14 subunits. The complex is composed of a catalytic core of 3 subunits MT-CO1, MT-CO2 and MT-CO3, encoded in the mitochondrial DNA, and 11 supernumerary subunits COX4I, COX5A, COX5B, COX6A, COX6B, COX6C, COX7A, COX7B, COX7C, COX8 and NDUFA4, which are encoded in the nuclear genome. The complex exists as a monomer or a dimer and forms supercomplexes (SCs) in the inner mitochondrial membrane with NADH-ubiquinone oxidoreductase (complex I, CI) and ubiquinol-cytochrome c oxidoreductase (cytochrome b-c1 complex, complex III, CIII), resulting in different assemblies (supercomplex SCI(1)III(2)IV(1) and megacomplex MCI(2)III(2)IV(2)). Interacts with AFG1L. Interacts with RAB5IF. In terms of processing, in response to mitochondrial stress, the precursor protein is ubiquitinated by the SIFI complex in the cytoplasm before mitochondrial import, leading to its degradation. Within the SIFI complex, UBR4 initiates ubiquitin chain that are further elongated or branched by KCMF1.

It is found in the mitochondrion inner membrane. The protein operates within energy metabolism; oxidative phosphorylation. Functionally, component of the cytochrome c oxidase, the last enzyme in the mitochondrial electron transport chain which drives oxidative phosphorylation. The respiratory chain contains 3 multisubunit complexes succinate dehydrogenase (complex II, CII), ubiquinol-cytochrome c oxidoreductase (cytochrome b-c1 complex, complex III, CIII) and cytochrome c oxidase (complex IV, CIV), that cooperate to transfer electrons derived from NADH and succinate to molecular oxygen, creating an electrochemical gradient over the inner membrane that drives transmembrane transport and the ATP synthase. Cytochrome c oxidase is the component of the respiratory chain that catalyzes the reduction of oxygen to water. Electrons originating from reduced cytochrome c in the intermembrane space (IMS) are transferred via the dinuclear copper A center (CU(A)) of subunit 2 and heme A of subunit 1 to the active site in subunit 1, a binuclear center (BNC) formed by heme A3 and copper B (CU(B)). The BNC reduces molecular oxygen to 2 water molecules using 4 electrons from cytochrome c in the IMS and 4 protons from the mitochondrial matrix. The protein is Cytochrome c oxidase subunit 5A, mitochondrial (COX5A) of Otolemur crassicaudatus (Brown greater galago).